The chain runs to 239 residues: Large ribosomal subunit protein uL30 (239 aa).

Residues 1-37 (MSKFVPENVQKKLARDEKLRKAKAEQRKASSAQMKQR) are disordered. The span at 9–28 (VQKKLARDEKLRKAKAEQRK) shows a compositional bias: basic and acidic residues.

This sequence belongs to the universal ribosomal protein uL30 family.

This Tetrahymena thermophila protein is Large ribosomal subunit protein uL30 (RPL7).